A 61-amino-acid chain; its full sequence is N-acetyl-D-glucosamine kinase (61 aa).

At tyrosine 30 the chain carries Phosphotyrosine. Residue serine 45 participates in ATP binding.

This sequence belongs to the eukaryotic-type N-acetylglucosamine kinase family. In terms of assembly, homodimer.

It catalyses the reaction N-acetyl-D-glucosamine + ATP = N-acetyl-D-glucosamine 6-phosphate + ADP + H(+). It carries out the reaction aldehydo-N-acetyl-D-mannosamine + ATP = aldehydo-N-acetyl-D-mannosamine 6-phosphate + ADP + H(+). The enzyme catalyses N-acetyl-D-muramoyl-L-alanyl-D-isoglutamine + ATP = 6-O-phospho-N-acetyl-D-muramoyl-L-alanyl-D-isoglutamine + ADP + H(+). The protein operates within amino-sugar metabolism; N-acetylneuraminate degradation. Its function is as follows. Converts endogenous N-acetylglucosamine (GlcNAc), a major component of complex carbohydrates, from lysosomal degradation or nutritional sources into GlcNAc 6-phosphate. Also has N-acetylmannosamine (ManNAc) kinase activity. Involved in the N-glycolylneuraminic acid (Neu5Gc) degradation pathway. Also involved in innate immunity by promoting detection of bacterial peptidoglycan by NOD2: acts by catalyzing phosphorylation of muramyl dipeptide (MDP), a fragment of bacterial peptidoglycan, to generate 6-O-phospho-muramyl dipeptide, which acts as a direct ligand for NOD2. In Mesocricetus auratus (Golden hamster), this protein is N-acetyl-D-glucosamine kinase.